The sequence spans 274 residues: Eukaryotic translation initiation factor 3 subunit G-2 (274 aa).

The RRM domain occupies 194–272 (SAVRISNLSE…LILCVEWSKP (79 aa)).

It belongs to the eIF-3 subunit G family. In terms of assembly, component of the eukaryotic translation initiation factor 3 (eIF-3) complex. The eIF-3 complex interacts with pix.

Its subcellular location is the cytoplasm. Functionally, RNA-binding component of the eukaryotic translation initiation factor 3 (eIF-3) complex, which is involved in protein synthesis of a specialized repertoire of mRNAs and, together with other initiation factors, stimulates binding of mRNA and methionyl-tRNAi to the 40S ribosome. The eIF-3 complex specifically targets and initiates translation of a subset of mRNAs involved in cell proliferation. This subunit can bind 18S rRNA. This chain is Eukaryotic translation initiation factor 3 subunit G-2, found in Drosophila pseudoobscura pseudoobscura (Fruit fly).